The chain runs to 861 residues: E3 ubiquitin-protein ligase HECTD3 (861 aa).

Ala-2 is subject to N-acetylalanine. Residue Ser-12 is modified to Phosphoserine. Residues 219 to 397 form the DOC domain; the sequence is DEDLIHFLYD…TSLVRYPRLE (179 aa). The 346-residue stretch at 512–857 folds into the HECT domain; the sequence is YEKPLDYRWP…NCVAIDTDMS (346 aa). The active-site Glycyl thioester intermediate is Cys-823.

In terms of assembly, interacts with TRIOBP. Interacts with STX8.

The protein resides in the cytoplasm. Its subcellular location is the perinuclear region. It catalyses the reaction S-ubiquitinyl-[E2 ubiquitin-conjugating enzyme]-L-cysteine + [acceptor protein]-L-lysine = [E2 ubiquitin-conjugating enzyme]-L-cysteine + N(6)-ubiquitinyl-[acceptor protein]-L-lysine.. The protein operates within protein modification; protein ubiquitination. In terms of biological role, E3 ubiquitin ligases accepts ubiquitin from an E2 ubiquitin-conjugating enzyme in the form of a thioester and then directly transfers the ubiquitin to targeted substrates. Mediates ubiquitination of TRIOBP and its subsequent proteasomal degradation, thus facilitating cell cycle progression by regulating the turn-over of TRIOBP. Mediates also ubiquitination of STX8. This Homo sapiens (Human) protein is E3 ubiquitin-protein ligase HECTD3 (HECTD3).